A 227-amino-acid polypeptide reads, in one-letter code: AN1-type zinc finger protein 3 (227 aa).

Residues 12–44 (PSLPPRCPCGFWGSSKTMNLCSKCFADFQKKQP) form an A20-type zinc finger. Cys-18, Cys-20, Cys-32, and Cys-35 together coordinate Zn(2+). 2 disordered regions span residues 41–100 (KKQP…EECG) and 113–148 (PTKRSCGTDSQSENEASPVKRPRLLENTERSEETSR). Residues 49 to 59 (APSTSNSQSDL) are compositionally biased toward polar residues. Over residues 66 to 77 (SDNNNTSITTPT) the composition is skewed to low complexity. Composition is skewed to polar residues over residues 78 to 94 (LSPSQQPLPTELNVTSP) and 113 to 127 (PTKRSCGTDSQSENE). The segment covering 135 to 148 (RLLENTERSEETSR) has biased composition (basic and acidic residues). The segment at 151 to 200 (QKSRRRCFQCQTKLELVQQELGSCRCGYVFCMLHRLPEQHDCTFDHMGRG) adopts an AN1-type zinc-finger fold. Cys-157, Cys-160, Cys-174, Cys-176, Cys-181, His-184, His-190, and Cys-192 together coordinate Zn(2+).

This is AN1-type zinc finger protein 3 (ZFAND3) from Homo sapiens (Human).